The chain runs to 261 residues: Indole-3-glycerol phosphate synthase (261 aa).

Belongs to the TrpC family.

It catalyses the reaction 1-(2-carboxyphenylamino)-1-deoxy-D-ribulose 5-phosphate + H(+) = (1S,2R)-1-C-(indol-3-yl)glycerol 3-phosphate + CO2 + H2O. Its pathway is amino-acid biosynthesis; L-tryptophan biosynthesis; L-tryptophan from chorismate: step 4/5. This chain is Indole-3-glycerol phosphate synthase, found in Oceanobacillus iheyensis (strain DSM 14371 / CIP 107618 / JCM 11309 / KCTC 3954 / HTE831).